Reading from the N-terminus, the 416-residue chain is MHDLVIRNGLCFINGEFVECSVGVDGNRITHVAKEVERGEIEIDAAGCLVMPGCFNAHTHAAMTLLRGYAEGLPLREWLEKVWEVEARLDEDAVYWGTMLACVEMLKSGVTAFADMYIHMDAVAEAVGESGMRAVLGYGMADRGDEERARKELEIGLEFAEKWNGGFEGRVTTMLAPHAPYTCSPEFLKVVSDASKDKGFLKHIHVSETLWEVKEVRERYGKRPVEFLDSIGFLDSSTVLAHAVWLSEAEMKILAERGVSVAHCPTSNLKLSSGIAKVSELLEMGVNVGIGTDGAASNNMLSVLSDARVGALLQNLRGRTLKPGHWLEMATEGGYRAYNLKGGRIEEGYLADIVVFSKTCRNAPMHDPAAMLYVENQALHAVVDGVLVMEDGILVNVEEEKVIEKAEETALELVGG.

His-58 and His-60 together coordinate Zn(2+). The substrate site is built by Glu-86 and His-178. His-205 contacts Zn(2+). 2 residues coordinate substrate: Glu-208 and Asp-293. A Zn(2+)-binding site is contributed by Asp-293.

This sequence belongs to the metallo-dependent hydrolases superfamily. MTA/SAH deaminase family. Zn(2+) serves as cofactor.

The catalysed reaction is S-adenosyl-L-homocysteine + H2O + H(+) = S-inosyl-L-homocysteine + NH4(+). It carries out the reaction S-methyl-5'-thioadenosine + H2O + H(+) = S-methyl-5'-thioinosine + NH4(+). Catalyzes the deamination of 5-methylthioadenosine and S-adenosyl-L-homocysteine into 5-methylthioinosine and S-inosyl-L-homocysteine, respectively. Is also able to deaminate adenosine. The chain is 5-methylthioadenosine/S-adenosylhomocysteine deaminase 2 from Archaeoglobus fulgidus (strain ATCC 49558 / DSM 4304 / JCM 9628 / NBRC 100126 / VC-16).